We begin with the raw amino-acid sequence, 1260 residues long: uncharacterized protein (1260 aa).

The protein resides in the plastid. The protein localises to the chloroplast. This is an uncharacterized protein from Ostreococcus tauri.